We begin with the raw amino-acid sequence, 671 residues long: Putative glycoside hydrolase BT_3595 (671 aa).

Residues 1-24 (MITGIISILCYLQCFGTLSASVTA) form the signal peptide.

This sequence belongs to the glycoside hydrolase-like 3 (GHL3) family.

The protein is Putative glycoside hydrolase BT_3595 of Bacteroides thetaiotaomicron (strain ATCC 29148 / DSM 2079 / JCM 5827 / CCUG 10774 / NCTC 10582 / VPI-5482 / E50).